Here is a 404-residue protein sequence, read N- to C-terminus: Inosine-5'-monophosphate dehydrogenase (404 aa).

NAD(+)-binding positions include aspartate 172 and glycine 222–glycine 224. Residues glycine 224 and glycine 226 each contribute to the K(+) site. Serine 227 lines the IMP pocket. Cysteine 229 provides a ligand contact to K(+). Residue cysteine 229 is the Thioimidate intermediate of the active site. IMP is bound by residues aspartate 262–glycine 264, glycine 285–asparagine 286, and tyrosine 309–glycine 313. The Proton acceptor role is filled by arginine 325. Glutamate 340 serves as a coordination point for IMP. The K(+) site is built by glutamate 394, serine 395, and histidine 396.

Belongs to the IMPDH/GMPR family. In terms of assembly, homotetramer. K(+) is required as a cofactor.

It carries out the reaction IMP + NAD(+) + H2O = XMP + NADH + H(+). Its pathway is purine metabolism; XMP biosynthesis via de novo pathway; XMP from IMP: step 1/1. Mycophenolic acid (MPA) is a non-competitive inhibitor that prevents formation of the closed enzyme conformation by binding to the same site as the amobile flap. In contrast, mizoribine monophosphate (MZP) is a competitive inhibitor that induces the closed conformation. MPA is a potent inhibitor of mammalian IMPDHs but a poor inhibitor of the bacterial enzymes. MZP is a more potent inhibitor of bacterial IMPDH. In terms of biological role, catalyzes the conversion of inosine 5'-phosphate (IMP) to xanthosine 5'-phosphate (XMP), the first committed and rate-limiting step in the de novo synthesis of guanine nucleotides, and therefore plays an important role in the regulation of cell growth. Essential for mouse infection by tick bite and critical for the survival in environments that appear to lack sufficient amounts of guanine, guanosine, and/or deoxyguanosine to support spirochete growth, such as mammalian host tissues. This chain is Inosine-5'-monophosphate dehydrogenase, found in Borreliella burgdorferi (strain ATCC 35210 / DSM 4680 / CIP 102532 / B31) (Borrelia burgdorferi).